The sequence spans 341 residues: L-threonine 3-dehydrogenase (341 aa).

Residue C38 coordinates Zn(2+). Active-site charge relay system residues include T40 and H43. Positions 63, 64, 93, 96, 99, and 107 each coordinate Zn(2+). NAD(+)-binding positions include I175, D195, R200, 262 to 264 (LGI), and 286 to 287 (IY).

Belongs to the zinc-containing alcohol dehydrogenase family. Homotetramer. Zn(2+) serves as cofactor.

The protein localises to the cytoplasm. It carries out the reaction L-threonine + NAD(+) = (2S)-2-amino-3-oxobutanoate + NADH + H(+). Its pathway is amino-acid degradation; L-threonine degradation via oxydo-reductase pathway; glycine from L-threonine: step 1/2. Functionally, catalyzes the NAD(+)-dependent oxidation of L-threonine to 2-amino-3-ketobutyrate. The polypeptide is L-threonine 3-dehydrogenase (Pseudoalteromonas translucida (strain TAC 125)).